A 329-amino-acid polypeptide reads, in one-letter code: MEKRGDVILGVEDESGQPVSALSILSLLERVSTIIDGVQASQQRMEERQQQLEGSVSAVQSELLKLARDHGATATTVDKLLQKARRVSTHVKEVRSRVEKQNVRVKKVETTQDELLTRNKFRVVIYQGEKEVPSVAVTKTPKGAGLAELEVEPDEYDIPADLSSDEEYMVVEDAESSRGARLKQSGLKGIENIKAAFSKENMNKTREKTRENLSKTKESLSKTGQTLGTKFNTLGEKIVPPEQREKIKQSSERLKENIAKKAPTKESFKIKLKKERTVAEGQEGAEAEPAVTPPKGRKSSPDVTYTEVVTENKREGPVSEEGATRIHED.

Disordered stretches follow at residues 198–260 (SKEN…NIAK) and 274–329 (KERT…IHED). Positions 198 to 262 (SKENMNKTRE…RLKENIAKKA (65 aa)) form a coiled coil. A compositionally biased stretch (basic and acidic residues) spans 201–220 (NMNKTREKTRENLSKTKESL). Positions 221 to 232 (SKTGQTLGTKFN) are enriched in polar residues. A compositionally biased stretch (basic and acidic residues) spans 242 to 260 (EQREKIKQSSERLKENIAK). Residues 279 to 290 (AEGQEGAEAEPA) are compositionally biased toward low complexity. At Thr292 the chain carries Phosphothreonine. The span at 310–329 (TENKREGPVSEEGATRIHED) shows a compositional bias: basic and acidic residues.

Belongs to the CAVIN family.

It is found in the cytoplasm. The protein localises to the myofibril. Its subcellular location is the sarcomere. It localises to the membrane. The protein resides in the caveola. Its function is as follows. Induces rhoa activation and activates nppa transcription and myofibrillar organization through the rho/rock signaling pathway. The sequence is that of Caveolae-associated protein 4a (cavin4a) from Danio rerio (Zebrafish).